Reading from the N-terminus, the 287-residue chain is Probable glucose uptake protein GlcU (287 aa).

The next 9 membrane-spanning stretches (helical) occupy residues 7–29 (LIAL…VGGG), 34–56 (IRGT…FAKF), 58–75 (NPTV…WAFG), 114–136 (WSSM…GVAL), 156–178 (MGIL…IFGV), 183–202 (ALFF…SMNH), 209–228 (TALN…FMFY), 233–255 (VGVA…GGIF), and 267–286 (TGIW…LGNL).

Belongs to the GRP transporter (TC 2.A.7.5) family.

Its subcellular location is the cell membrane. Functionally, involved in the uptake of glucose. The sequence is that of Probable glucose uptake protein GlcU (glcU) from Staphylococcus aureus (strain COL).